The following is a 412-amino-acid chain: MQLQLLKESGQREVFCGLTSIVWLHRRMPDAFFLVVGSRTCAHLIQSAAGVMIFAEPRFGTAILGERDLAGLADANEELDRVVADLLQRRPEIRTLFLVGSCPSEVIKLDLSKAAERLNQQHRGRVQVVNYSGSGIETTFTQGEDQALTALVPLMPQSTTPQLLLVGTLADGVEERFLTLFERLGIGPVASLPPRRSTELPAVGPGTKLLLTQPFLGQTARALQAKGAELISSPYPLGVEGSELWFRAAARAFGISDEHTTSVLEPLVTRGRAALEPHRKALEGKRLFLLPDSQMELALGRFLQRECGMELVEVGTPYLDRALQQEELDLLPADVQLSEGQNVEEQLQRVRQSHPDLVVCGMGLANPLEAEGITTKWSIELVFSPIHGCDQAGDLAELFARPLRRRGALTFA.

[4Fe-4S] cluster is bound by residues Cys-16, Cys-41, and Cys-102.

Belongs to the BchN/ChlN family. In terms of assembly, protochlorophyllide reductase is composed of three subunits; ChlL, ChlN and ChlB. Forms a heterotetramer of two ChlB and two ChlN subunits. [4Fe-4S] cluster serves as cofactor.

The enzyme catalyses chlorophyllide a + oxidized 2[4Fe-4S]-[ferredoxin] + 2 ADP + 2 phosphate = protochlorophyllide a + reduced 2[4Fe-4S]-[ferredoxin] + 2 ATP + 2 H2O. The protein operates within porphyrin-containing compound metabolism; chlorophyll biosynthesis (light-independent). Functionally, component of the dark-operative protochlorophyllide reductase (DPOR) that uses Mg-ATP and reduced ferredoxin to reduce ring D of protochlorophyllide (Pchlide) to form chlorophyllide a (Chlide). This reaction is light-independent. The NB-protein (ChlN-ChlB) is the catalytic component of the complex. This is Light-independent protochlorophyllide reductase subunit N from Synechococcus sp. (strain RCC307).